An 89-amino-acid polypeptide reads, in one-letter code: Small ribosomal subunit protein uS15 (89 aa).

This sequence belongs to the universal ribosomal protein uS15 family. In terms of assembly, part of the 30S ribosomal subunit. Forms a bridge to the 50S subunit in the 70S ribosome, contacting the 23S rRNA.

Its function is as follows. One of the primary rRNA binding proteins, it binds directly to 16S rRNA where it helps nucleate assembly of the platform of the 30S subunit by binding and bridging several RNA helices of the 16S rRNA. In terms of biological role, forms an intersubunit bridge (bridge B4) with the 23S rRNA of the 50S subunit in the ribosome. In Thermodesulfovibrio yellowstonii (strain ATCC 51303 / DSM 11347 / YP87), this protein is Small ribosomal subunit protein uS15.